Consider the following 160-residue polypeptide: Putative pre-16S rRNA nuclease (160 aa).

The protein belongs to the YqgF nuclease family.

It is found in the cytoplasm. Functionally, could be a nuclease involved in processing of the 5'-end of pre-16S rRNA. This chain is Putative pre-16S rRNA nuclease, found in Chelativorans sp. (strain BNC1).